The following is a 511-amino-acid chain: 2-isopropylmalate synthase (511 aa).

Residues 5-267 form the Pyruvate carboxyltransferase domain; sequence IQIFDTTLRD…ESQINLEETK (263 aa). Residues D14, H202, H204, and N238 each coordinate Mn(2+). Residues 391-511 form a regulatory domain region; the sequence is QLDNLQLQYV…EYELKEGIRT (121 aa).

Belongs to the alpha-IPM synthase/homocitrate synthase family. LeuA type 1 subfamily. As to quaternary structure, homodimer. Requires Mn(2+) as cofactor.

Its subcellular location is the cytoplasm. It catalyses the reaction 3-methyl-2-oxobutanoate + acetyl-CoA + H2O = (2S)-2-isopropylmalate + CoA + H(+). The protein operates within amino-acid biosynthesis; L-leucine biosynthesis; L-leucine from 3-methyl-2-oxobutanoate: step 1/4. Functionally, catalyzes the condensation of the acetyl group of acetyl-CoA with 3-methyl-2-oxobutanoate (2-ketoisovalerate) to form 3-carboxy-3-hydroxy-4-methylpentanoate (2-isopropylmalate). The chain is 2-isopropylmalate synthase from Staphylococcus epidermidis (strain ATCC 35984 / DSM 28319 / BCRC 17069 / CCUG 31568 / BM 3577 / RP62A).